Consider the following 358-residue polypeptide: Peptide chain release factor 1 (358 aa).

Gln-235 carries the post-translational modification N5-methylglutamine.

Belongs to the prokaryotic/mitochondrial release factor family. Methylated by PrmC. Methylation increases the termination efficiency of RF1.

The protein resides in the cytoplasm. Functionally, peptide chain release factor 1 directs the termination of translation in response to the peptide chain termination codons UAG and UAA. The polypeptide is Peptide chain release factor 1 (Neisseria meningitidis serogroup C (strain 053442)).